A 153-amino-acid polypeptide reads, in one-letter code: Regulatory protein RecX (153 aa).

This sequence belongs to the RecX family.

The protein resides in the cytoplasm. Functionally, modulates RecA activity. The polypeptide is Regulatory protein RecX (Vibrio vulnificus (strain CMCP6)).